We begin with the raw amino-acid sequence, 95 residues long: Pyrimidine/purine nucleoside phosphorylase (95 aa).

The protein belongs to the nucleoside phosphorylase PpnP family.

It carries out the reaction a purine D-ribonucleoside + phosphate = a purine nucleobase + alpha-D-ribose 1-phosphate. It catalyses the reaction adenosine + phosphate = alpha-D-ribose 1-phosphate + adenine. The catalysed reaction is cytidine + phosphate = cytosine + alpha-D-ribose 1-phosphate. The enzyme catalyses guanosine + phosphate = alpha-D-ribose 1-phosphate + guanine. It carries out the reaction inosine + phosphate = alpha-D-ribose 1-phosphate + hypoxanthine. It catalyses the reaction thymidine + phosphate = 2-deoxy-alpha-D-ribose 1-phosphate + thymine. The catalysed reaction is uridine + phosphate = alpha-D-ribose 1-phosphate + uracil. The enzyme catalyses xanthosine + phosphate = alpha-D-ribose 1-phosphate + xanthine. Catalyzes the phosphorolysis of diverse nucleosides, yielding D-ribose 1-phosphate and the respective free bases. Can use uridine, adenosine, guanosine, cytidine, thymidine, inosine and xanthosine as substrates. Also catalyzes the reverse reactions. The polypeptide is Pyrimidine/purine nucleoside phosphorylase (Yersinia pestis bv. Antiqua (strain Antiqua)).